The sequence spans 301 residues: Phosphatidylglycerol--prolipoprotein diacylglyceryl transferase (301 aa).

7 consecutive transmembrane segments (helical) span residues 17 to 37 (LAVRWYGLMYLVAFIMAIVVG), 59 to 79 (MLFYGVLGTILGGRFGYVLFY), 97 to 117 (GGMSFHGGFLGVTFAMILFAW), 129 to 149 (FVAPMVPAGLAAGRLGNFING), 203 to 223 (PSQLYEIALEGVVLFLVLWLF), 230 to 250 (VGAASAVFLIGYGLARFTVEF), and 257 to 277 (FLGLLALGLSMGQWLSLPMII). Residue arginine 142 coordinates a 1,2-diacyl-sn-glycero-3-phospho-(1'-sn-glycerol).

This sequence belongs to the Lgt family.

The protein localises to the cell inner membrane. It carries out the reaction L-cysteinyl-[prolipoprotein] + a 1,2-diacyl-sn-glycero-3-phospho-(1'-sn-glycerol) = an S-1,2-diacyl-sn-glyceryl-L-cysteinyl-[prolipoprotein] + sn-glycerol 1-phosphate + H(+). Its pathway is protein modification; lipoprotein biosynthesis (diacylglyceryl transfer). Its function is as follows. Catalyzes the transfer of the diacylglyceryl group from phosphatidylglycerol to the sulfhydryl group of the N-terminal cysteine of a prolipoprotein, the first step in the formation of mature lipoproteins. This is Phosphatidylglycerol--prolipoprotein diacylglyceryl transferase from Paraburkholderia phymatum (strain DSM 17167 / CIP 108236 / LMG 21445 / STM815) (Burkholderia phymatum).